We begin with the raw amino-acid sequence, 25 residues long: Flagellar filament core protein flaB3 (25 aa).

This sequence belongs to the bacterial flagellin family. In terms of assembly, the flagellum consists of an outer layer composed of two sheath proteins, flaA1 (44 kDa) and flaA2 (35 kDa) around a core that contains three proteins flaB1 (37 kDa), flaB2 (34 kDa) and flaB3 (32 kDa).

It is found in the periplasmic flagellum. The protein resides in the periplasm. In terms of biological role, component of the core of the flagella. In Brachyspira hyodysenteriae (Treponema hyodysenteriae), this protein is Flagellar filament core protein flaB3 (flaB3).